The sequence spans 190 residues: E3 ubiquitin-protein ligase RNF183 (190 aa).

Residues 1–159 (MSEPQGQELR…RECVRNPHFR (159 aa)) lie on the Cytoplasmic side of the membrane. Residues 13–60 (CPVCWNPFNNTFHTPKVLDCCHSFCVECLAHLSLVTPARRRLLCPLCR) form an RING-type zinc finger. A helical; Anchor for type IV membrane protein membrane pass occupies residues 160–180 (IFAYLMAVILSVTLLLIFSIF). The Lumenal portion of the chain corresponds to 181 to 190 (WTKQFFWGMG).

Interacts with FATE1. Interacts with SEC16A. Interacts with BCL2L1. In terms of processing, autoubiquitinated (in vitro). As to expression, highly expressed in the kidney and testis.

Its subcellular location is the endoplasmic reticulum membrane. The protein localises to the endoplasmic reticulum. It localises to the golgi apparatus. The protein resides in the cis-Golgi network membrane. It is found in the lysosome membrane. The catalysed reaction is S-ubiquitinyl-[E2 ubiquitin-conjugating enzyme]-L-cysteine + [acceptor protein]-L-lysine = [E2 ubiquitin-conjugating enzyme]-L-cysteine + N(6)-ubiquitinyl-[acceptor protein]-L-lysine.. It functions in the pathway protein modification; protein ubiquitination. In terms of biological role, acts as an E3 ubiquitin ligase catalyzing the covalent attachment of ubiquitin moieties onto substrate proteins. Triggers apoptosis in response to prolonged ER stress by mediating the polyubiquitination and subsequent proteasomal degradation of BCL2L1. May collaborate with FATE1 to restrain BIK protein levels thus regulating apoptotic signaling. This chain is E3 ubiquitin-protein ligase RNF183 (Rnf183), found in Mus musculus (Mouse).